The chain runs to 191 residues: MLNIGIFGAPGSGKGTQSELISEKYSLYPISTGEILRREIKDKTELGKIAEEYINQGQLLPDYLTIRILVDLFDKVDNNKGYIFDGFPRTISQAKALDDLLKEQNTSIAIVFSLSVDEKELIRRLLKRGKLFSRKDDNLETIQNRLTVYREQTESVQEYYRKKGKLMEIIGKNSVEEVFENIVEKIDNLFR.

Gly11–Thr16 lines the ATP pocket. The interval Ser31 to Leu60 is NMP. AMP-binding positions include Thr32, Arg37, Gln58–Leu60, Gly86–Arg89, and Gln93. The segment at Lys127 to Asp137 is LID. Arg128 is a binding site for ATP. The AMP site is built by Arg134 and Arg145. Asn173 provides a ligand contact to ATP.

The protein belongs to the adenylate kinase family. Monomer.

Its subcellular location is the cytoplasm. It catalyses the reaction AMP + ATP = 2 ADP. Its pathway is purine metabolism; AMP biosynthesis via salvage pathway; AMP from ADP: step 1/1. In terms of biological role, catalyzes the reversible transfer of the terminal phosphate group between ATP and AMP. Plays an important role in cellular energy homeostasis and in adenine nucleotide metabolism. This Azobacteroides pseudotrichonymphae genomovar. CFP2 protein is Adenylate kinase.